Consider the following 480-residue polypeptide: Glutamate--tRNA ligase (480 aa).

The short motif at 21–31 is the 'HIGH' region element; sequence PSPTGYLHVGG. Zn(2+) is bound by residues C110, C112, C137, and H139. Residues 248–252 carry the 'KMSKS' region motif; the sequence is KLSKR. ATP is bound at residue K251.

This sequence belongs to the class-I aminoacyl-tRNA synthetase family. Glutamate--tRNA ligase type 1 subfamily. As to quaternary structure, monomer. Requires Zn(2+) as cofactor.

It is found in the cytoplasm. It catalyses the reaction tRNA(Glu) + L-glutamate + ATP = L-glutamyl-tRNA(Glu) + AMP + diphosphate. Its function is as follows. Catalyzes the attachment of glutamate to tRNA(Glu) in a two-step reaction: glutamate is first activated by ATP to form Glu-AMP and then transferred to the acceptor end of tRNA(Glu). The protein is Glutamate--tRNA ligase of Histophilus somni (strain 2336) (Haemophilus somnus).